The primary structure comprises 152 residues: Xanthine-guanine phosphoribosyltransferase (152 aa).

5-phospho-alpha-D-ribose 1-diphosphate contacts are provided by residues Arg37–Gly38, Arg69, and Asp88–Thr96. Arg69 is a binding site for GMP. Mg(2+) is bound at residue Asp89. Residues Asp92 and Ile135 each contribute to the guanine site. Xanthine contacts are provided by Asp92 and Ile135. GMP contacts are provided by residues Asp92–Thr96 and Trp134–Ile135.

This sequence belongs to the purine/pyrimidine phosphoribosyltransferase family. XGPT subfamily. Homotetramer. Requires Mg(2+) as cofactor.

The protein resides in the cell inner membrane. It catalyses the reaction GMP + diphosphate = guanine + 5-phospho-alpha-D-ribose 1-diphosphate. The enzyme catalyses XMP + diphosphate = xanthine + 5-phospho-alpha-D-ribose 1-diphosphate. It carries out the reaction IMP + diphosphate = hypoxanthine + 5-phospho-alpha-D-ribose 1-diphosphate. Its pathway is purine metabolism; GMP biosynthesis via salvage pathway; GMP from guanine: step 1/1. The protein operates within purine metabolism; XMP biosynthesis via salvage pathway; XMP from xanthine: step 1/1. In terms of biological role, purine salvage pathway enzyme that catalyzes the transfer of the ribosyl-5-phosphate group from 5-phospho-alpha-D-ribose 1-diphosphate (PRPP) to the N9 position of the 6-oxopurines guanine and xanthine to form the corresponding ribonucleotides GMP (guanosine 5'-monophosphate) and XMP (xanthosine 5'-monophosphate), with the release of PPi. To a lesser extent, also acts on hypoxanthine. The chain is Xanthine-guanine phosphoribosyltransferase from Klebsiella pneumoniae (strain 342).